Consider the following 802-residue polypeptide: Leucine--tRNA ligase (802 aa).

The short motif at 40 to 51 (PYPSGAGLHVGH) is the 'HIGH' region element. The 'KMSKS' region signature appears at 576–580 (KMSKS). Lys579 serves as a coordination point for ATP.

Belongs to the class-I aminoacyl-tRNA synthetase family.

It is found in the cytoplasm. The catalysed reaction is tRNA(Leu) + L-leucine + ATP = L-leucyl-tRNA(Leu) + AMP + diphosphate. The polypeptide is Leucine--tRNA ligase (Bacillus cereus (strain G9842)).